We begin with the raw amino-acid sequence, 196 residues long: ATP-dependent Clp protease proteolytic subunit (196 aa).

Ser96 (nucleophile) is an active-site residue. His121 is an active-site residue.

It belongs to the peptidase S14 family. Fourteen ClpP subunits assemble into 2 heptameric rings which stack back to back to give a disk-like structure with a central cavity, resembling the structure of eukaryotic proteasomes.

The protein localises to the cytoplasm. The enzyme catalyses Hydrolysis of proteins to small peptides in the presence of ATP and magnesium. alpha-casein is the usual test substrate. In the absence of ATP, only oligopeptides shorter than five residues are hydrolyzed (such as succinyl-Leu-Tyr-|-NHMec, and Leu-Tyr-Leu-|-Tyr-Trp, in which cleavage of the -Tyr-|-Leu- and -Tyr-|-Trp bonds also occurs).. In terms of biological role, cleaves peptides in various proteins in a process that requires ATP hydrolysis. Has a chymotrypsin-like activity. Plays a major role in the degradation of misfolded proteins. The protein is ATP-dependent Clp protease proteolytic subunit of Streptococcus salivarius.